Consider the following 336-residue polypeptide: MLIAQRPTLSEEVVSDNRSRFIIEPLEPGFGYTLGNSLRRTLLSSIPGAAVTSIRIDGVLHEFTTVPGVKEDVTEIILNIKNLSVSSEHDEPVVAYLRKQGPGVVTAADIAPPAGVEFHNPDLHIATLNSKGKFELELTIERGRGYVSAAQNKSGDAEIGRIPVDSIYSPVLKVTFRVEATRVEQRTDFDRLIVDVETKQAIAPRDAVASAGTTLVELFGLARELNTAAEGIEIGPSPTDAALAADMALPIEDLDLTVRSYNCLKREGIHTVGELVARSEADLMDIRNFGAKSIDEVKAKLVELGLSLKDSPPGFDLAARAAAIDESDDAFGDDEL.

The interval 1-226 (MLIAQRPTLS…ELFGLARELN (226 aa)) is alpha N-terminal domain (alpha-NTD). The alpha C-terminal domain (alpha-CTD) stretch occupies residues 243–336 (LAADMALPIE…SDDAFGDDEL (94 aa)).

The protein belongs to the RNA polymerase alpha chain family. As to quaternary structure, homodimer. The RNAP catalytic core consists of 2 alpha, 1 beta, 1 beta' and 1 omega subunit. When a sigma factor is associated with the core the holoenzyme is formed, which can initiate transcription.

The enzyme catalyses RNA(n) + a ribonucleoside 5'-triphosphate = RNA(n+1) + diphosphate. In terms of biological role, DNA-dependent RNA polymerase catalyzes the transcription of DNA into RNA using the four ribonucleoside triphosphates as substrates. This is DNA-directed RNA polymerase subunit alpha from Renibacterium salmoninarum (strain ATCC 33209 / DSM 20767 / JCM 11484 / NBRC 15589 / NCIMB 2235).